The sequence spans 174 residues: Large ribosomal subunit protein uL5 (174 aa).

Belongs to the universal ribosomal protein uL5 family. As to quaternary structure, part of the 50S ribosomal subunit; contacts the 5S rRNA and probably tRNA. Forms a bridge to the 30S subunit in the 70S ribosome.

Its function is as follows. This is one of the proteins that bind and probably mediate the attachment of the 5S RNA into the large ribosomal subunit, where it forms part of the central protuberance. In the 70S ribosome it contacts protein S13 of the 30S subunit (bridge B1b), connecting the 2 subunits; this bridge is implicated in subunit movement. May contact the P site tRNA; the 5S rRNA and some of its associated proteins might help stabilize positioning of ribosome-bound tRNAs. In Halorubrum lacusprofundi (strain ATCC 49239 / DSM 5036 / JCM 8891 / ACAM 34), this protein is Large ribosomal subunit protein uL5.